A 393-amino-acid chain; its full sequence is Zinc-regulated GTPase metalloprotein activator 1 (393 aa).

The psi-PxLVp motif motif lies at 16–23 (EDCPELVP). 47–54 (GYLGAGKT) provides a ligand contact to GTP. Residues Cys-105, Cys-107, and Cys-108 each contribute to the Zn(2+) site. The CXCC motif motif lies at 105–108 (CLCC). Residues 108–112 (CSVKD) and 201–204 (NKTD) each bind GTP. Positions 271-374 (IVTVTFEVPG…VLQQLFLTAV (104 aa)) constitute a CobW C-terminal domain.

Belongs to the SIMIBI class G3E GTPase family. ZNG1 subfamily. In terms of tissue distribution, present at high level in the nuclei of the ureteric bud cells in the developing kidneys.

It is found in the nucleus. It catalyses the reaction GTP + H2O = GDP + phosphate + H(+). Its function is as follows. Zinc chaperone that directly transfers zinc cofactor to target metalloproteins, thereby activating them. Catalyzes zinc insertion into the active site of methionine aminopeptidase METAP1, which function to cleave the initiator methionine from polypeptides during or after protein translation. Mechanistically, the N-terminal psi-PxLVp motif binds to the C6H2-type zinc finger of inactive form of METAP1. After formation of the docked complex, zinc is transferred from the CXCC motif in the GTPase domain of ZNG1 to the zinc binding site in the peptidase domain of METAP1 in a process requiring GTP hydrolysis. GTP/GDP exchange is required for release of active METAP1. This Mus musculus (Mouse) protein is Zinc-regulated GTPase metalloprotein activator 1 (Zng1).